Here is a 289-residue protein sequence, read N- to C-terminus: Pyridoxal kinase PdxY (289 aa).

Substrate-binding positions include Ser-9 and 44-45 (TQ). ATP is bound by residues Asp-112, Val-144, Glu-149, and Lys-182. Asp-221 is a binding site for substrate.

Belongs to the pyridoxine kinase family. PdxY subfamily. In terms of assembly, homodimer. Mg(2+) serves as cofactor.

The enzyme catalyses pyridoxal + ATP = pyridoxal 5'-phosphate + ADP + H(+). Its pathway is cofactor metabolism; pyridoxal 5'-phosphate salvage; pyridoxal 5'-phosphate from pyridoxal: step 1/1. Pyridoxal kinase involved in the salvage pathway of pyridoxal 5'-phosphate (PLP). Catalyzes the phosphorylation of pyridoxal to PLP. The polypeptide is Pyridoxal kinase PdxY (Vibrio campbellii (strain ATCC BAA-1116)).